Reading from the N-terminus, the 354-residue chain is uncharacterized protein (354 aa).

In terms of domain architecture, ABC transporter spans 48–285; sequence VETWEISKIY…DEGYEVVLKG (238 aa). ATP is bound at residue 87-94; it reads GPNGAGKT.

It belongs to the ABC transporter superfamily.

This is an uncharacterized protein from Synechocystis sp. (strain ATCC 27184 / PCC 6803 / Kazusa).